A 169-amino-acid chain; its full sequence is Shikimate kinase (169 aa).

ATP is bound at residue 12–17 (GCGKST). Serine 16 lines the Mg(2+) pocket. Aspartate 34, arginine 57, and glycine 79 together coordinate substrate. Residue arginine 116 coordinates ATP. Arginine 133 contributes to the substrate binding site.

It belongs to the shikimate kinase family. Monomer. Mg(2+) is required as a cofactor.

The protein resides in the cytoplasm. The catalysed reaction is shikimate + ATP = 3-phosphoshikimate + ADP + H(+). The protein operates within metabolic intermediate biosynthesis; chorismate biosynthesis; chorismate from D-erythrose 4-phosphate and phosphoenolpyruvate: step 5/7. Catalyzes the specific phosphorylation of the 3-hydroxyl group of shikimic acid using ATP as a cosubstrate. The protein is Shikimate kinase of Clostridium beijerinckii (strain ATCC 51743 / NCIMB 8052) (Clostridium acetobutylicum).